The primary structure comprises 907 residues: Clathrin coat assembly protein AP180 (907 aa).

The ENTH domain maps to 14-145 (QYSVTGSAVA…FSYRQMAFDF (132 aa)). Disordered stretches follow at residues 285–326 (LEGK…DTSP), 342–380 (TSKP…TAWG), 393–414 (SVPS…PTTT), and 505–525 (VPVV…APSP). Phosphoserine is present on residues Ser296, Ser300, and Ser306. The segment covering 302–324 (LSKSSPATTVTSPNSTPAKTIDT) has biased composition (polar residues). O-linked (GlcNAc) threonine glycosylation is present at Thr310. Phosphoserine is present on Ser313. Thr317 is modified (phosphothreonine). A compositionally biased stretch (low complexity) spans 505–515 (VPVVTPTASTA). Over residues 516-525 (PPVPATAPSP) the composition is skewed to pro residues. Ser596, Ser602, Ser623, Ser629, and Ser763 each carry phosphoserine. Position 865 is an asymmetric dimethylarginine; alternate (Arg865). Omega-N-methylarginine; alternate is present on Arg865. The disordered stretch occupies residues 867–907 (PFGAAAVPGTQLSPSPTPASQSPKKPPAKDPLADLNIKDFL). Residues 893-907 (PAKDPLADLNIKDFL) show a composition bias toward basic and acidic residues.

It belongs to the PICALM/SNAP91 family. Binds AP2A2. Interacts with AP2B1; clathrin competes with SNAP91. Thr-310 can be modified by the addition of N-acetylglucosamine which can be further phosphorylated. There is no evidence for direct Thr-310 phosphorylation.

It localises to the cell membrane. The protein localises to the membrane. Its subcellular location is the coated pit. Adaptins are components of the adapter complexes which link clathrin to receptors in coated vesicles. Clathrin-associated protein complexes are believed to interact with the cytoplasmic tails of membrane proteins, leading to their selection and concentration. Binding of AP180 to clathrin triskelia induces their assembly into 60-70 nm coats. The chain is Clathrin coat assembly protein AP180 (SNAP91) from Homo sapiens (Human).